The sequence spans 627 residues: MSVISIVPLASNSCLYKSLMSSTHELKALCRPIATLGMCRRGKSVMASMSTSLTTAVSDDGVQRRIGHHHSNLWDDNFIQSLSSPYGASSYAESAKKLIGEVKEIFNSLSMAAGGLMSPVDDLLQHLSMVDNVERLGIDRHFQTEIKVSLDYVYSYWSEKGIGSGRDIVCTDLNTTALGFRILRLHGYTVFPDVFEHFKDQMGRIACSANHTERQISSILNLFRASLIAFPGEKVMEEAEIFSATYLKEALQTIPVSSLSQEMQYVLDYRWHSNLPRLETRTYIDILGETTINQMQDVNIQKLLELAKLEFNIFHSIQQNELKCISRWWKESGSPELTFIRHRHIEFYTLASGIDMEPKHSAFRLSFVKMCHLITVLDDIYDTFGTMDELRLFTSAVKRWDRSEIECLPEYMKGVYIILYETVNEMAREARKSQGRDTLNYARLALEEYIGAYLKEAEWISMGYLPTFEEYFKNGKVSSGHRIATLQPILTLDIPFPHHILQEIDFPSKFNELACSILRLRGDTRCYQADRDRGEKASCISCYMKDNPGSTEEDALNHINGMIEDTIKQLNWELLRPDNNVPISSKKHSFDISRAFHHLYRYRDGYTVSSNETKNLVVRTVLEPLPM.

A chloroplast-targeting transit peptide spans methionine 1 to methionine 46. Mg(2+)-binding residues include aspartate 378, aspartate 382, and aspartate 530. Residues aspartate 378–aspartate 382 carry the DDXXD motif motif.

Belongs to the terpene synthase family. Tpsd subfamily. In terms of assembly, monomer. Requires Mg(2+) as cofactor.

It is found in the plastid. Its subcellular location is the chloroplast. It catalyses the reaction (2E)-geranyl diphosphate = (1R,5R)-sabinene + diphosphate. Its pathway is terpene metabolism; oleoresin biosynthesis. In terms of biological role, terpene synthase (TPS) involved in defensive oleoresin formation in conifers in response to insect attack (e.g. white pine weevil P.strobi) or other injury. Produces (+)-sabinene from geranyl diphosphate, but has no activity with geranylgeranyl diphosphate or farnesyl diphosphate. This is (+)-sabinene synthase, chloroplastic (TPS-sab) from Picea sitchensis (Sitka spruce).